The chain runs to 981 residues: Translation initiation factor IF-2 (981 aa).

Residues 31-370 (FVKSASSTVE…SKRAKRAEYE (340 aa)) form a disordered region. Over residues 64–87 (GAAAPAARPAAKPGAPSPSAAKPG) the composition is skewed to low complexity. Positions 88 to 111 (GPRPGPKPAAPAPAAPAAPAPAAP) are enriched in pro residues. Over residues 112–121 (AAPAAAAPAA) the composition is skewed to low complexity. Positions 136–145 (PAQPARPAPA) are enriched in pro residues. Over residues 146–165 (APAASAPAAPAAPAAPSTGA) the composition is skewed to low complexity. Positions 256-269 (RPSPGSMPPRPNPG) are enriched in pro residues. The span at 270–279 (AMPARSARPA) shows a compositional bias: low complexity. Positions 280–339 (PGGGGRPGRPGGAPGGRPGGGGGGYRGGGAPGAGAGAGAPGGAAPAGGFRGRPGGGGRPG) are enriched in gly residues. Positions 356 to 365 (RRGRKSKRAK) are enriched in basic residues. Residues 477–649 (SRPPVVTVMG…VLLTADASLD (173 aa)) form the tr-type G domain. Positions 486-493 (GHVDHGKT) are G1. A GTP-binding site is contributed by 486–493 (GHVDHGKT). The G2 stretch occupies residues 511 to 515 (GITQH). The segment at 536 to 539 (DTPG) is G3. GTP is bound by residues 536–540 (DTPGH) and 590–593 (NKID). A G4 region spans residues 590–593 (NKID). The tract at residues 626 to 628 (SAK) is G5.

It belongs to the TRAFAC class translation factor GTPase superfamily. Classic translation factor GTPase family. IF-2 subfamily.

The protein localises to the cytoplasm. In terms of biological role, one of the essential components for the initiation of protein synthesis. Protects formylmethionyl-tRNA from spontaneous hydrolysis and promotes its binding to the 30S ribosomal subunits. Also involved in the hydrolysis of GTP during the formation of the 70S ribosomal complex. In Rhodococcus erythropolis (strain PR4 / NBRC 100887), this protein is Translation initiation factor IF-2.